The following is a 117-amino-acid chain: Large ribosomal subunit protein bL20c (117 aa).

Belongs to the bacterial ribosomal protein bL20 family.

It localises to the plastid. The protein resides in the chloroplast. Its function is as follows. Binds directly to 23S ribosomal RNA and is necessary for the in vitro assembly process of the 50S ribosomal subunit. It is not involved in the protein synthesizing functions of that subunit. This chain is Large ribosomal subunit protein bL20c, found in Manihot esculenta (Cassava).